The primary structure comprises 146 residues: Cytochrome b5 type B (146 aa).

Residues 1-11 constitute a propeptide that is removed on maturation; sequence MATPEASGSGR. Residues 20–96 enclose the Cytochrome b5 heme-binding domain; that stretch reads VTYYRLEEVA…LKQYYIGDVH (77 aa). Position 30 is an N6-acetyllysine (lysine 30). Residues histidine 55 and histidine 79 each coordinate heme. Serine 80 carries the post-translational modification Phosphoserine. A helical transmembrane segment spans residues 119–136; it reads WAYWIVPIVGAILIGFLY.

The protein belongs to the cytochrome b5 family. In terms of assembly, component of a complex composed of cytochrome b5, NADH-cytochrome b5 reductase (CYB5R3) and MTARC2.

Its subcellular location is the mitochondrion outer membrane. In terms of biological role, cytochrome b5 is a membrane-bound hemoprotein functioning as an electron carrier for several membrane-bound oxygenases. The protein is Cytochrome b5 type B (Cyb5b) of Rattus norvegicus (Rat).